The following is a 129-amino-acid chain: Transcription antitermination protein NusB (129 aa).

The protein belongs to the NusB family.

Functionally, involved in transcription antitermination. Required for transcription of ribosomal RNA (rRNA) genes. Binds specifically to the boxA antiterminator sequence of the ribosomal RNA (rrn) operons. This is Transcription antitermination protein NusB from Staphylococcus aureus (strain MRSA252).